Here is a 118-residue protein sequence, read N- to C-terminus: Mitochondrial protein YPR099C (118 aa).

The protein localises to the mitochondrion. In terms of biological role, essential for the functional mitochondria and respiratory growth. In Saccharomyces cerevisiae (strain ATCC 204508 / S288c) (Baker's yeast), this protein is Mitochondrial protein YPR099C.